The primary structure comprises 259 residues: MQFNNKPLIGVVHLPPLPGSPGYKGELDEVIDRAISDAAKYQEAGFDAIILENYGDFPYSKTVGKETVSAFSVVANEVKREIALPLGINVLRNDCIAAYSIAYSIKADFIRVNVLTGVAFTDQGIVEGCARELAELRTRLPSRIDVLADVHVKHATHFSNFENALLDTIERGGADAVIVTGSRTGSEVDIQELITAKRISPVPVLVGSGVNPRNIKLFWRYSDGFIVGTWVKEGGRTINEVSIERATKLAKLVKSLREG.

It belongs to the BtpA family.

This is an uncharacterized protein from Pyrococcus horikoshii (strain ATCC 700860 / DSM 12428 / JCM 9974 / NBRC 100139 / OT-3).